We begin with the raw amino-acid sequence, 543 residues long: Sensor histidine kinase DcuS (543 aa).

Over 1-20 (MRHSLPYRMLRKRPMKLSTT) the chain is Cytoplasmic. Residues 21–41 (VILMVSAVLFSVLLVVHLIYF) form a helical membrane-spanning segment. The Periplasmic segment spans residues 42–181 (SQISDMTRDG…VTQQINDSRW (140 aa)). (R)-malate is bound by residues 107–110 (RYSH), K121, 140–142 (GFL), and R147. A helical membrane pass occupies residues 182–202 (SIIWSVLFGMLVGLIGTCILV). Residues 203-543 (NVLKKILFGL…IPWDGERSNR (341 aa)) lie on the Cytoplasmic side of the membrane. The PAS domain occupies 212–323 (LEPYEISTLF…IIGAISTFRD (112 aa)). The 193-residue stretch at 346 to 538 (ERSHEFMNKL…QFFVQIPWDG (193 aa)) folds into the Histidine kinase domain. Phosphohistidine; by autocatalysis is present on H349.

In terms of assembly, homodimer. Post-translationally, autophosphorylated. The phosphoryl group is rapidly transferred to DcuR.

Its subcellular location is the cell inner membrane. The enzyme catalyses ATP + protein L-histidine = ADP + protein N-phospho-L-histidine.. Member of the two-component regulatory system DcuR/DcuS. Involved in the C4-dicarboxylate-stimulated regulation of the genes encoding the anaerobic fumarate respiratory system (frdABCD; nuoAN; dcuB; sdhCDAB; etc.). Weakly regulates the aerobic C4-dicarboxylate transporter dctA. Activates DcuR by phosphorylation. This is Sensor histidine kinase DcuS (dcuS) from Escherichia coli O6:H1 (strain CFT073 / ATCC 700928 / UPEC).